We begin with the raw amino-acid sequence, 121 residues long: Insertion element IS406 uncharacterized 13.3 kDa protein (121 aa).

The chain is Insertion element IS406 uncharacterized 13.3 kDa protein from Burkholderia multivorans (strain ATCC 17616 / 249).